Reading from the N-terminus, the 647-residue chain is Threonine--tRNA ligase (647 aa).

The TGS domain maps to 1–61 (MINITFPDGA…TEDGSIEIVT (61 aa)). The catalytic stretch occupies residues 242–540 (DHRKLGKELD…LIENYKGAFP (299 aa)). Zn(2+) is bound by residues Cys-336, His-387, and His-517.

It belongs to the class-II aminoacyl-tRNA synthetase family. As to quaternary structure, homodimer. Requires Zn(2+) as cofactor.

The protein resides in the cytoplasm. The catalysed reaction is tRNA(Thr) + L-threonine + ATP = L-threonyl-tRNA(Thr) + AMP + diphosphate + H(+). In terms of biological role, catalyzes the attachment of threonine to tRNA(Thr) in a two-step reaction: L-threonine is first activated by ATP to form Thr-AMP and then transferred to the acceptor end of tRNA(Thr). Also edits incorrectly charged L-seryl-tRNA(Thr). This is Threonine--tRNA ligase from Streptococcus pneumoniae (strain 70585).